Reading from the N-terminus, the 194-residue chain is Imidazoleglycerol-phosphate dehydratase (194 aa).

This sequence belongs to the imidazoleglycerol-phosphate dehydratase family.

The protein resides in the cytoplasm. It carries out the reaction D-erythro-1-(imidazol-4-yl)glycerol 3-phosphate = 3-(imidazol-4-yl)-2-oxopropyl phosphate + H2O. Its pathway is amino-acid biosynthesis; L-histidine biosynthesis; L-histidine from 5-phospho-alpha-D-ribose 1-diphosphate: step 6/9. In Halalkalibacterium halodurans (strain ATCC BAA-125 / DSM 18197 / FERM 7344 / JCM 9153 / C-125) (Bacillus halodurans), this protein is Imidazoleglycerol-phosphate dehydratase.